The primary structure comprises 145 residues: Ribosomal RNA large subunit methyltransferase H (145 aa).

Residues leucine 64, glycine 93, and 112-117 (LSALTF) each bind S-adenosyl-L-methionine.

Belongs to the RNA methyltransferase RlmH family. Homodimer.

The protein resides in the cytoplasm. It carries out the reaction pseudouridine(1915) in 23S rRNA + S-adenosyl-L-methionine = N(3)-methylpseudouridine(1915) in 23S rRNA + S-adenosyl-L-homocysteine + H(+). In terms of biological role, specifically methylates the pseudouridine at position 1915 (m3Psi1915) in 23S rRNA. This Prochlorococcus marinus (strain SARG / CCMP1375 / SS120) protein is Ribosomal RNA large subunit methyltransferase H.